Reading from the N-terminus, the 420-residue chain is Mitogen-activated protein kinase HOG2 (420 aa).

ATP is bound by residues 29 to 37 and K52; that span reads VGMGAFGLV. D144 acts as the Proton acceptor in catalysis. T174 carries the post-translational modification Phosphothreonine. A TXY motif is present at residues 174-176; that stretch reads TGY. Y176 carries the phosphotyrosine modification. The interval 372 to 394 is disordered; that stretch reads AQHHHQTQQQSSGKHTNPTTSSS.

This sequence belongs to the protein kinase superfamily. Ser/Thr protein kinase family. MAP kinase subfamily. HOG1 sub-subfamily. Mg(2+) is required as a cofactor. In terms of processing, dually phosphorylated on Thr-174 and Tyr-176, which activates the enzyme.

The protein localises to the cytoplasm. It localises to the nucleus. The catalysed reaction is L-seryl-[protein] + ATP = O-phospho-L-seryl-[protein] + ADP + H(+). It catalyses the reaction L-threonyl-[protein] + ATP = O-phospho-L-threonyl-[protein] + ADP + H(+). With respect to regulation, activated by tyrosine and threonine phosphorylation. Functionally, mitogen-activated protein kinase involved in a signal transduction pathway that is activated by changes in the osmolarity of the extracellular environment. Controls osmotic regulation of transcription of target genes. The chain is Mitogen-activated protein kinase HOG2 (HOG2) from Zygosaccharomyces rouxii.